The following is an 80-amino-acid chain: Conotoxin MaIr193 (80 aa).

The first 22 residues, 1-22 (MKLTCMMIVAVLFLTAWTLVTA), serve as a signal peptide directing secretion. A propeptide spanning residues 23–51 (DGTRDGLKNRFPKARLEMKNSEAPRSRGR) is cleaved from the precursor. Cystine bridges form between cysteine 52-cysteine 69, cysteine 59-cysteine 73, and cysteine 68-cysteine 77. Residue proline 64 is modified to 4-hydroxyproline.

Belongs to the conotoxin O1 superfamily. Expressed by the venom duct.

It localises to the secreted. This chain is Conotoxin MaIr193, found in Conus marmoreus (Marble cone).